Reading from the N-terminus, the 875-residue chain is Cell surface glycoprotein (875 aa).

Positions M1 to A23 are cleaved as a signal peptide. Positions E137–G157 are enriched in polar residues. Disordered regions lie at residues E137–P158 and L197–V217. Low complexity predominate over residues D205–D216. A glycan (N-linked (GlcNAc...) asparagine) is linked at N253. Residues Y380 to E414 form a disordered region. The segment covering S383 to V402 has biased composition (polar residues). Residues N455, N563, N715, and N774 are each glycosylated (N-linked (GlcNAc...) asparagine). The tract at residues E794 to P852 is disordered. Over residues S797–T846 the composition is skewed to acidic residues. A helical membrane pass occupies residues G851–N875. Residues P852 to F854 carry the PGF sorting signal motif.

It belongs to the halobacterial S-layer protein family. Asn-455 is glycosylated by a pentasaccharide comprising a hexose, 2 hexuronic acids, a methyl ester of a hexuronic acid and a final hexose. The complete pentasaccharide is first assembled on dolichol phosphate and then transferred the glycan to the target Asn. Post-translationally, cleaved by the archaeosortase ArtA at the C-terminus, with removal of a short hydrophobic segment. In terms of processing, lipidation.

Its subcellular location is the secreted. The protein resides in the cell wall. The protein localises to the S-layer. It is found in the cell membrane. S-layer protein. The S-layer is a paracrystalline mono-layered assembly of proteins which coat the surface of the cell. The protein is Cell surface glycoprotein (csg1) of Haloarcula marismortui (strain ATCC 43049 / DSM 3752 / JCM 8966 / VKM B-1809) (Halobacterium marismortui).